The chain runs to 218 residues: dTTP/UTP pyrophosphatase (218 aa).

Polar residues predominate over residues 1–10 (MTASPSSAEG). The segment at 1–20 (MTASPSSAEGSSGLPDRPKL) is disordered. The active-site Proton acceptor is Asp87.

This sequence belongs to the Maf family. YhdE subfamily. The cofactor is a divalent metal cation.

The protein resides in the cytoplasm. The enzyme catalyses dTTP + H2O = dTMP + diphosphate + H(+). It catalyses the reaction UTP + H2O = UMP + diphosphate + H(+). In terms of biological role, nucleoside triphosphate pyrophosphatase that hydrolyzes dTTP and UTP. May have a dual role in cell division arrest and in preventing the incorporation of modified nucleotides into cellular nucleic acids. The polypeptide is dTTP/UTP pyrophosphatase (Gluconobacter oxydans (strain 621H) (Gluconobacter suboxydans)).